The chain runs to 297 residues: Tumor necrosis factor receptor superfamily member 27 (297 aa).

The Extracellular segment spans residues 1–138; that stretch reads MDCQENEYWD…TPTVPPQEAT (138 aa). TNFR-Cys repeat units follow at residues 2–41, 43–83, and 85–118; these read DCQE…DAYC, ACPP…NAVC, and DCLP…EVQC. Disulfide bonds link Cys3–Cys15, Cys18–Cys31, Cys21–Cys41, Cys44–Cys58, Cys61–Cys75, Cys64–Cys83, Cys86–Cys104, and Cys107–Cys118. Asn74 is a glycosylation site (N-linked (GlcNAc...) asparagine). A helical; Signal-anchor for type III membrane protein transmembrane segment spans residues 139-159; sequence LVALVSSLLVVFTLAFLGLFF. The Cytoplasmic segment spans residues 160–297; sequence LYCKQFFNRH…LNVPFEVPSP (138 aa). The span at 272 to 281 shows a compositional bias: polar residues; sequence ETLGGNTVES. The tract at residues 272–297 is disordered; sequence ETLGGNTVESTGDRLELNVPFEVPSP.

Associates with TRAF1, TRAF3 and TRAF6.

Its subcellular location is the membrane. In terms of biological role, receptor for EDA isoform A2, but not for EDA isoform A1. Mediates the activation of the NF-kappa-B and JNK pathways. Activation seems to be mediated by binding to TRAF3 and TRAF6. This Homo sapiens (Human) protein is Tumor necrosis factor receptor superfamily member 27 (EDA2R).